Consider the following 250-residue polypeptide: Kallikrein-14 (250 aa).

Residues 1–18 (MFLLLIILQALAVAIAQS) form the signal peptide. A propeptide spans 19–23 (QGDHK) (activation peptide). The region spanning 24-248 (IIGGYRCVRN…YHSWIQRTMQ (225 aa)) is the Peptidase S1 domain. A disulfide bond links Cys-51 and Cys-67. Catalysis depends on charge relay system residues His-66 and Asp-110. 3 disulfide bridges follow: Cys-142-Cys-209, Cys-174-Cys-188, and Cys-199-Cys-224. The Charge relay system role is filled by Ser-203.

The protein belongs to the peptidase S1 family. Kallikrein subfamily. Proteolytic cleavage of the activation peptide produces the active enzyme.

It localises to the secreted. The protein resides in the extracellular space. With respect to regulation, inhibited by SERPINA1, SERPINC1, SERPINE1, SERPINF2, aprotinin, soybean, trypsin inhibitor and leupeptin. Inhibited by serine protease inhibitor SPINK5. Has an autoproteolytic activity which may have a regulatory effect. Activated by citrate and inhibited by zinc and to a lower extent by manganese. Serine-type endopeptidase with a dual trypsin-like and chymotrypsin-like substrate specificity. May activate/inactivate the proteinase-activated receptors F2R, F2RL1 and F2RL3 and other kallikreins including KLK1, KLK3, KLK5 and KLK11. May function in seminal clot liquefaction through direct cleavage of the semenogelin SEMG1 and SEMG2 and activation of KLK3. May function through desmoglein DSG1 cleavage in epidermal desquamation a process by which the most superficial corneocytes are shed from the skin surface. May be involved in several aspects of tumor progression including growth, invasion and angiogenesis. In Mus musculus (Mouse), this protein is Kallikrein-14 (Klk14).